Here is a 123-residue protein sequence, read N- to C-terminus: Large ribosomal subunit protein uL18 (123 aa).

It belongs to the universal ribosomal protein uL18 family. As to quaternary structure, part of the 50S ribosomal subunit; part of the 5S rRNA/L5/L18/L25 subcomplex. Contacts the 5S and 23S rRNAs.

Its function is as follows. This is one of the proteins that bind and probably mediate the attachment of the 5S RNA into the large ribosomal subunit, where it forms part of the central protuberance. This chain is Large ribosomal subunit protein uL18, found in Chlamydia abortus (strain DSM 27085 / S26/3) (Chlamydophila abortus).